A 428-amino-acid chain; its full sequence is UPF0229 protein YeaH (428 aa).

Over residues 77–90 (PGNDHFIQNDRIER) the composition is skewed to basic and acidic residues. Residues 77–111 (PGNDHFIQNDRIERPQSGGGGGSGSGQGQASQDGE) form a disordered region. The segment covering 93 to 103 (SGGGGGSGSGQ) has biased composition (gly residues).

The protein belongs to the UPF0229 family.

This Salmonella typhi protein is UPF0229 protein YeaH.